A 120-amino-acid chain; its full sequence is NAD(P)H-quinone oxidoreductase subunit 3 (120 aa).

A run of 3 helical transmembrane segments spans residues 7–27, 64–84, and 89–109; these read YEYVLGFLLACSLIPILALTA, MFALVFVVFDVETVFLYPWAV, and LGLLAFVEALIFIAILVVALV.

This sequence belongs to the complex I subunit 3 family. As to quaternary structure, NDH-1 can be composed of about 15 different subunits; different subcomplexes with different compositions have been identified which probably have different functions.

The protein localises to the cellular thylakoid membrane. The catalysed reaction is a plastoquinone + NADH + (n+1) H(+)(in) = a plastoquinol + NAD(+) + n H(+)(out). It carries out the reaction a plastoquinone + NADPH + (n+1) H(+)(in) = a plastoquinol + NADP(+) + n H(+)(out). In terms of biological role, NDH-1 shuttles electrons from an unknown electron donor, via FMN and iron-sulfur (Fe-S) centers, to quinones in the respiratory and/or the photosynthetic chain. The immediate electron acceptor for the enzyme in this species is believed to be plastoquinone. Couples the redox reaction to proton translocation, and thus conserves the redox energy in a proton gradient. Cyanobacterial NDH-1 also plays a role in inorganic carbon-concentration. This is NAD(P)H-quinone oxidoreductase subunit 3 from Crocosphaera subtropica (strain ATCC 51142 / BH68) (Cyanothece sp. (strain ATCC 51142)).